The following is a 410-amino-acid chain: Bifunctional malic/malolactic enzyme (410 aa).

Catalysis depends on Y36, which acts as the Proton donor. The active-site Proton acceptor is K91. The a divalent metal cation site is built by E133, D134, and D159. NADP(+)-binding positions include 192–195 (AGAA), N286, and N317.

Belongs to the malic enzymes family. As to quaternary structure, interacts with BrxC. Mg(2+) serves as cofactor. It depends on Mn(2+) as a cofactor.

It catalyses the reaction (S)-malate + NADP(+) = pyruvate + CO2 + NADPH. The catalysed reaction is oxaloacetate + H(+) = pyruvate + CO2. It carries out the reaction (S)-malate + H(+) = (S)-lactate + CO2. Its activity is regulated as follows. NADPH is a strong modulator that switches activity from a pyruvate-producing malic enzyme to a lactate-generating malolactic enzyme. Bifunctional enzyme with both malic and malolactic enzyme activities. In the absence of NADPH, catalyzes the reversible decarboxylation of malate to pyruvate. Can use NAD and NADP, but with a very strong preference for NADP. In the presence of excess NADPH, catalyzes the non-oxidative decarboxylation of malate to lactate. During growth on glucose, contributes to NADPH balancing via oxidation of the NADPH produced in excess by other enzymatic reactions. Can also catalyze the decarboxylation of oxaloacetate. The chain is Bifunctional malic/malolactic enzyme (ytsJ) from Bacillus subtilis (strain 168).